Consider the following 385-residue polypeptide: Meiosis-specific protein MEI4 (385 aa).

The interaction with REC114 stretch occupies residues 1–126 (MDVQKWYLRT…LSQHFVESCT (126 aa)). The segment at 86 to 110 (AQEPKSSESTLTSMEDSGCDLSNEQ) is disordered. Residues 92–107 (SESTLTSMEDSGCDLS) are compositionally biased toward polar residues.

This sequence belongs to the MEI4L family. In terms of assembly, part of the MCD recombinosome complex, at least composed of IHO1, REC114 and MEI4. Forms a complex with REC114; the interaction is required for MEI4 stability. Interacts (via N-terminal domain) with REC114 (via C-terminal domain). Interacts with IHO1.

It localises to the chromosome. Functionally, required for DNA double-strand breaks (DSBs) formation in unsynapsed regions during meiotic recombination. Probably acts by forming a complex with IHO1 and REC114, which activates DSBs formation in unsynapsed regions, an essential step to ensure completion of synapsis. The polypeptide is Meiosis-specific protein MEI4 (Homo sapiens (Human)).